Consider the following 404-residue polypeptide: Putative CBL-interacting protein kinase 27 (404 aa).

The Protein kinase domain maps to 11-266; the sequence is YEMGRVLGHG…VAGLLETPWF (256 aa). Residues 17–25 and Lys40 contribute to the ATP site; that span reads LGHGNFGRV. Residue Asp134 is the Proton acceptor of the active site. Positions 152–181 are activation loop; it reads DFGLSALACHARPDGLLHTACGTPAYVAPE. An NAF domain is found at 294–321; sequence DKDEPPEVLNAFHLISLSEGFDLSPLFE. Positions 335 to 356 are PPI; sequence AGGTRFATREAASGVVARLEAL.

It belongs to the protein kinase superfamily. CAMK Ser/Thr protein kinase family. SNF1 subfamily. Mn(2+) is required as a cofactor.

It carries out the reaction L-seryl-[protein] + ATP = O-phospho-L-seryl-[protein] + ADP + H(+). The catalysed reaction is L-threonyl-[protein] + ATP = O-phospho-L-threonyl-[protein] + ADP + H(+). CIPK serine-threonine protein kinases interact with CBL proteins. Binding of a CBL protein to the regulatory NAF domain of CIPK protein lead to the activation of the kinase in a calcium-dependent manner. The chain is Putative CBL-interacting protein kinase 27 (CIPK27) from Oryza sativa subsp. japonica (Rice).